A 414-amino-acid polypeptide reads, in one-letter code: Enterobactin exporter EntS (414 aa).

Topologically, residues 1–21 (MNRQSWLLNLSLLKTHPAFRA) are cytoplasmic. A helical transmembrane segment spans residues 22–42 (VFLARFISIVSLGLLGVAVPV). At 43-55 (QIQMMTHSTWQVG) the chain is on the periplasmic side. The chain crosses the membrane as a helical span at residues 56–76 (LSVTLTGGAMFIGLMVGGVLA). At 77–83 (DRYERKK) the chain is on the cytoplasmic side. Residues 84–104 (VILLARGTCGIGFIGLCVNSL) traverse the membrane as a helical segment. At 105–109 (LPEPS) the chain is on the periplasmic side. The chain crosses the membrane as a helical span at residues 110-130 (LLAIYLLGLWDGFFASLGVTA). Over 131–156 (LLAATPALVGRENLMQAGAITMLTVR) the chain is Cytoplasmic. The chain crosses the membrane as a helical span at residues 157–177 (LGSVISPMLGGILLASGGVAW). Position 178 (Asn-178) is a topological domain, periplasmic. A helical membrane pass occupies residues 179-199 (YGLAAAGTFITLLPLLTLPRL). At 200–218 (PVPPQPRENPFIALLAAFR) the chain is on the cytoplasmic side. A helical membrane pass occupies residues 219-239 (FLLASPLIGGIALLGGLVTMA). The Periplasmic portion of the chain corresponds to 240 to 256 (SAVRVLYPALAMSWQMS). A helical transmembrane segment spans residues 257–277 (AAQIGLLYAAIPLGAAIGALT). The Cytoplasmic segment spans residues 278–287 (SGQLAHSVRP). The helical transmembrane segment at 288–307 (GLIMLVSTVGSFLAVGLFAI) threads the bilayer. Residues 308 to 313 (MPVWTA) lie on the Periplasmic side of the membrane. The helical transmembrane segment at 314–336 (GVICLALFGWLSAISSLLQYTLL) threads the bilayer. Over 337–356 (QTQTPENMLGRMNGLWTAQN) the chain is Cytoplasmic. Residues 357 to 377 (VTGDAIGAALLGGLGAMMTPV) form a helical membrane-spanning segment. A topological domain (periplasmic) is located at residue Ala-378. The chain crosses the membrane as a helical span at residues 379 to 399 (SASVSGFGLVIIGLLLLLVLG). The Cytoplasmic portion of the chain corresponds to 400 to 414 (ELRRFRQTPPVSDAG).

It belongs to the major facilitator superfamily. EntS (TC 2.A.1.38) family.

It localises to the cell inner membrane. In terms of biological role, component of an export pathway for enterobactin. This Salmonella choleraesuis (strain SC-B67) protein is Enterobactin exporter EntS.